Reading from the N-terminus, the 290-residue chain is HTH-type transcriptional activator RhaR (290 aa).

The region spanning 179-277 (DLIMSALQQS…GMTPRDYRQR (99 aa)) is the HTH araC/xylS-type domain. 2 DNA-binding regions (H-T-H motif) span residues 196–217 (ADFC…RQQT) and 244–267 (ISDI…TREA).

In terms of assembly, binds DNA as a dimer.

The protein resides in the cytoplasm. In terms of biological role, activates expression of the rhaSR operon in response to L-rhamnose. This Yersinia pestis bv. Antiqua (strain Antiqua) protein is HTH-type transcriptional activator RhaR.